The primary structure comprises 364 residues: Caveolae-associated protein 4 (364 aa).

The disordered stretch occupies residues methionine 1–aspartate 24. The stretch at valine 44–glutamine 77 forms a coiled coil. Phosphoserine occurs at positions 172 and 173. Positions phenylalanine 202 to valine 226 form a coiled coil. The span at arginine 231–lysine 256 shows a compositional bias: basic and acidic residues. Disordered stretches follow at residues arginine 231–alanine 283 and serine 311–proline 339. Tyrosine 326 carries the phosphotyrosine modification. At threonine 336 the chain carries Phosphothreonine. A Phosphoserine modification is found at serine 355.

This sequence belongs to the CAVIN family. As to quaternary structure, component of the CAVIN complex composed of CAVIN1, CAVIN2, CAVIN3 and CAVIN4. Interacts with CAVIN1, ADRA1A and ADRA1B. Interacts with CAVIN2; this augments the transactivation of NPPA. Interacts with CAV3. Interacts with MAPK1 and MAPK3.

The protein localises to the cytoplasm. The protein resides in the myofibril. It is found in the sarcomere. It localises to the cytosol. Its subcellular location is the cell membrane. The protein localises to the sarcolemma. The protein resides in the membrane. It is found in the caveola. Modulates the morphology of formed caveolae in cardiomyocytes, but is not required for caveolar formation. Facilitates the recruitment of MAPK1/3 to caveolae within cardiomyocytes and regulates alpha-1 adrenergic receptor-induced hypertrophic responses in cardiomyocytes through MAPK1/3 activation. Contributes to proper membrane localization and stabilization of caveolin-3 (CAV3) in cardiomyocytes. Induces RHOA activation and activates NPPA transcription and myofibrillar organization through the Rho/ROCK signaling pathway. In Homo sapiens (Human), this protein is Caveolae-associated protein 4.